Consider the following 350-residue polypeptide: TATA box-binding protein-like 2 (350 aa).

A disordered region spans residues 82–150 (ENRDQTVTGN…QPSPETPNSN (69 aa)). A compositionally biased stretch (basic and acidic residues) spans 94 to 116 (ASEESCRTRDRQSQLQLPDEHGS). Polar residues-rich tracts occupy residues 118 to 128 (LNLNSNSSPDP) and 139 to 150 (SNQPSPETPNSN).

This sequence belongs to the TBP family. In terms of assembly, interacts with TAF3. In terms of tissue distribution, expressed in myotubes and myofibers (at protein level). Expressed in a wide variety of tissues with highest levels in heart, lung, liver, uterus and placenta and especially the gonads. Expression is higher in the ovary than the testis, and within the ovary expression is localized to the oocytes.

It is found in the cytoplasm. Its subcellular location is the nucleus. In terms of biological role, transcription factor required in complex with TAF3 for the differentiation of myoblasts into myocytes. The complex replaces TFIID at specific promoters at an early stage in the differentiation process. The polypeptide is TATA box-binding protein-like 2 (Mus musculus (Mouse)).